A 244-amino-acid chain; its full sequence is 3-deoxy-manno-octulosonate cytidylyltransferase (244 aa).

It belongs to the KdsB family.

The protein resides in the cytoplasm. The catalysed reaction is 3-deoxy-alpha-D-manno-oct-2-ulosonate + CTP = CMP-3-deoxy-beta-D-manno-octulosonate + diphosphate. Its pathway is nucleotide-sugar biosynthesis; CMP-3-deoxy-D-manno-octulosonate biosynthesis; CMP-3-deoxy-D-manno-octulosonate from 3-deoxy-D-manno-octulosonate and CTP: step 1/1. It functions in the pathway bacterial outer membrane biogenesis; lipopolysaccharide biosynthesis. In terms of biological role, activates KDO (a required 8-carbon sugar) for incorporation into bacterial lipopolysaccharide in Gram-negative bacteria. This is 3-deoxy-manno-octulosonate cytidylyltransferase from Rickettsia bellii (strain OSU 85-389).